The primary structure comprises 453 residues: tRNA modification GTPase MnmE (453 aa).

Residues Arg22, Glu79, and Lys119 each coordinate (6S)-5-formyl-5,6,7,8-tetrahydrofolate. Positions 215 to 376 (GMKVVIAGRP…LKQHLKSLMG (162 aa)) constitute a TrmE-type G domain. Asn225 contacts K(+). GTP-binding positions include 225–230 (NAGKSS), 244–250 (TEIAGTT), 269–272 (DTAG), and 334–337 (NKAD). Ser229 contributes to the Mg(2+) binding site. K(+) contacts are provided by Thr244, Ile246, and Thr249. Thr250 contacts Mg(2+). Lys453 contributes to the (6S)-5-formyl-5,6,7,8-tetrahydrofolate binding site.

It belongs to the TRAFAC class TrmE-Era-EngA-EngB-Septin-like GTPase superfamily. TrmE GTPase family. In terms of assembly, homodimer. Heterotetramer of two MnmE and two MnmG subunits. It depends on K(+) as a cofactor.

The protein localises to the cytoplasm. Its function is as follows. Exhibits a very high intrinsic GTPase hydrolysis rate. Involved in the addition of a carboxymethylaminomethyl (cmnm) group at the wobble position (U34) of certain tRNAs, forming tRNA-cmnm(5)s(2)U34. The protein is tRNA modification GTPase MnmE of Shewanella frigidimarina (strain NCIMB 400).